A 339-amino-acid polypeptide reads, in one-letter code: UDP-3-O-acylglucosamine N-acyltransferase (339 aa).

Residue His-239 is the Proton acceptor of the active site.

This sequence belongs to the transferase hexapeptide repeat family. LpxD subfamily. In terms of assembly, homotrimer.

It catalyses the reaction a UDP-3-O-[(3R)-3-hydroxyacyl]-alpha-D-glucosamine + a (3R)-hydroxyacyl-[ACP] = a UDP-2-N,3-O-bis[(3R)-3-hydroxyacyl]-alpha-D-glucosamine + holo-[ACP] + H(+). Its pathway is bacterial outer membrane biogenesis; LPS lipid A biosynthesis. In terms of biological role, catalyzes the N-acylation of UDP-3-O-acylglucosamine using 3-hydroxyacyl-ACP as the acyl donor. Is involved in the biosynthesis of lipid A, a phosphorylated glycolipid that anchors the lipopolysaccharide to the outer membrane of the cell. The polypeptide is UDP-3-O-acylglucosamine N-acyltransferase (Aliivibrio fischeri (strain ATCC 700601 / ES114) (Vibrio fischeri)).